Consider the following 197-residue polypeptide: HTH-type transcriptional regulator BetI (197 aa).

Residues 8-68 form the HTH tetR-type domain; that stretch reads PIRRQQLIQA…ATMRHLMNAL (61 aa). Positions 31-50 form a DNA-binding region, H-T-H motif; sequence SIALIARLAGVSNGIISHYF.

The protein operates within amine and polyamine biosynthesis; betaine biosynthesis via choline pathway [regulation]. Repressor involved in the biosynthesis of the osmoprotectant glycine betaine. It represses transcription of the choline transporter BetT and the genes of BetAB involved in the synthesis of glycine betaine. This is HTH-type transcriptional regulator BetI from Pseudomonas savastanoi pv. phaseolicola (strain 1448A / Race 6) (Pseudomonas syringae pv. phaseolicola (strain 1448A / Race 6)).